Consider the following 449-residue polypeptide: Procollagen C-endopeptidase enhancer 1 (449 aa).

The first 25 residues, 1–25 (MLPAATASLLGPLLTACALLPFAQG), serve as a signal peptide directing secretion. Asparagine 29 carries N-linked (GlcNAc...) asparagine glycosylation. 7 disulfides stabilise this stretch: cysteine 37–cysteine 63, cysteine 90–cysteine 112, cysteine 159–cysteine 186, cysteine 213–cysteine 236, cysteine 318–cysteine 386, cysteine 322–cysteine 389, and cysteine 333–cysteine 437. CUB domains follow at residues 37 to 149 (CGGD…YSGR) and 159 to 273 (CGGR…YKTL). Serine 50 is subject to Phosphoserine. Residues 271-321 (KTLPRGTAKEGQGPGPKRGTEPKVKLPPKSQPPEKTEESPSAPDAPTCPKQ) are disordered. An NTR domain is found at 318-437 (CPKQCRRTGT…ILTNLSKRKC (120 aa)). Asparagine 431 carries an N-linked (GlcNAc...) asparagine glycan.

Interacts with EFEMP2. In terms of processing, C-terminally processed at multiple positions.

It is found in the secreted. Functionally, binds to the C-terminal propeptide of type I procollagen and enhances procollagen C-proteinase activity. Its function is as follows. C-terminal processed part of PCPE (CT-PCPE) may have an metalloproteinase inhibitory activity. This Homo sapiens (Human) protein is Procollagen C-endopeptidase enhancer 1 (PCOLCE).